The chain runs to 595 residues: L-fucose isomerase (595 aa).

Residues Glu-341 and Asp-365 each act as proton acceptor in the active site. Residues Glu-341, Asp-365, and His-531 each coordinate Mn(2+).

Belongs to the L-fucose isomerase family. The cofactor is Mn(2+).

Its subcellular location is the cytoplasm. It catalyses the reaction L-fucose = L-fuculose. Its pathway is carbohydrate degradation; L-fucose degradation; L-lactaldehyde and glycerone phosphate from L-fucose: step 1/3. Converts the aldose L-fucose into the corresponding ketose L-fuculose. In Clostridium perfringens (strain 13 / Type A), this protein is L-fucose isomerase.